Consider the following 75-residue polypeptide: UPF0512 protein D (75 aa).

A disordered region spans residues 1–20 (MAIFKSISSISNSTGSMGSS).

It belongs to the UPF0512 family.

This is UPF0512 protein D from Dictyostelium discoideum (Social amoeba).